A 371-amino-acid chain; its full sequence is Methionine import ATP-binding protein MetN (371 aa).

The 242-residue stretch at 29–270 folds into the ABC transporter domain; the sequence is IRIEGVRKVY…PRHEVTRRFV (242 aa). Position 67 to 74 (67 to 74) interacts with ATP; it reads GRSGAGKS.

The protein belongs to the ABC transporter superfamily. Methionine importer (TC 3.A.1.24) family. In terms of assembly, the complex is composed of two ATP-binding proteins (MetN), two transmembrane proteins (MetI) and a solute-binding protein (MetQ).

Its subcellular location is the cell inner membrane. The enzyme catalyses L-methionine(out) + ATP + H2O = L-methionine(in) + ADP + phosphate + H(+). It catalyses the reaction D-methionine(out) + ATP + H2O = D-methionine(in) + ADP + phosphate + H(+). Part of the ABC transporter complex MetNIQ involved in methionine import. Responsible for energy coupling to the transport system. This Rhodopseudomonas palustris (strain BisA53) protein is Methionine import ATP-binding protein MetN.